Here is a 186-residue protein sequence, read N- to C-terminus: dCTP deaminase (186 aa).

Lysine 107 to arginine 112 is a binding site for dCTP. Glutamate 133 acts as the Proton donor/acceptor in catalysis. Residues glutamine 152, tyrosine 166, and glutamine 176 each contribute to the dCTP site.

This sequence belongs to the dCTP deaminase family. As to quaternary structure, homotrimer.

The catalysed reaction is dCTP + H2O + H(+) = dUTP + NH4(+). It functions in the pathway pyrimidine metabolism; dUMP biosynthesis; dUMP from dCTP (dUTP route): step 1/2. Catalyzes the deamination of dCTP to dUTP. The sequence is that of dCTP deaminase from Campylobacter lari (strain RM2100 / D67 / ATCC BAA-1060).